Reading from the N-terminus, the 561-residue chain is Long-chain-fatty-acid--CoA ligase (561 aa).

213–224 contributes to the ATP binding site; the sequence is YTGGTTGVAKGA.

It belongs to the ATP-dependent AMP-binding enzyme family. Mg(2+) serves as cofactor.

Its subcellular location is the membrane. The catalysed reaction is a long-chain fatty acid + ATP + CoA = a long-chain fatty acyl-CoA + AMP + diphosphate. It participates in lipid metabolism; fatty acid beta-oxidation. In terms of biological role, catalyzes the esterification, concomitant with transport, of exogenous long-chain fatty acids into metabolically active CoA thioesters for subsequent degradation or incorporation into phospholipids. This Escherichia coli O157:H7 protein is Long-chain-fatty-acid--CoA ligase (fadD).